Here is a 101-residue protein sequence, read N- to C-terminus: Large ribosomal subunit protein uL24 (101 aa).

The protein belongs to the universal ribosomal protein uL24 family. In terms of assembly, part of the 50S ribosomal subunit.

Its function is as follows. One of two assembly initiator proteins, it binds directly to the 5'-end of the 23S rRNA, where it nucleates assembly of the 50S subunit. In terms of biological role, one of the proteins that surrounds the polypeptide exit tunnel on the outside of the subunit. This is Large ribosomal subunit protein uL24 from Borrelia garinii subsp. bavariensis (strain ATCC BAA-2496 / DSM 23469 / PBi) (Borreliella bavariensis).